The following is a 433-amino-acid chain: Glutamate-1-semialdehyde 2,1-aminomutase (433 aa).

Residue Lys-271 is modified to N6-(pyridoxal phosphate)lysine.

This sequence belongs to the class-III pyridoxal-phosphate-dependent aminotransferase family. HemL subfamily. Homodimer. Pyridoxal 5'-phosphate is required as a cofactor.

The protein resides in the cytoplasm. The catalysed reaction is (S)-4-amino-5-oxopentanoate = 5-aminolevulinate. It functions in the pathway porphyrin-containing compound metabolism; protoporphyrin-IX biosynthesis; 5-aminolevulinate from L-glutamyl-tRNA(Glu): step 2/2. The protein operates within porphyrin-containing compound metabolism; chlorophyll biosynthesis. The protein is Glutamate-1-semialdehyde 2,1-aminomutase of Prochlorococcus marinus (strain MIT 9515).